The following is a 444-amino-acid chain: Transcription activator AFTR-2 (444 aa).

The segment at residues 16–43 (CDFCTQSKLRCNKNKPSCRRCTLQQQPC) is a DNA-binding region (zn(2)-C6 fungal-type). Residues 49–88 (RRTGRPPKHPRKANDCQEANGQHGDQDPVTSTPGGSYQQQ) are disordered. The span at 50–59 (RTGRPPKHPR) shows a compositional bias: basic residues. The segment covering 76 to 88 (PVTSTPGGSYQQQ) has biased composition (polar residues).

It is found in the nucleus. In terms of biological role, transcription factor that regulates the expression of the gene clusters that mediate the biosynthesis of the host-selective toxins (HSTs) AF-toxins responsible for Alternaria black spot of strawberry disease by the strawberry pathotype. On cellular level, AF-toxins affect plasma membrane of susceptible cells and cause a sudden increase in loss of K(+) after a few minutes of toxin treatment. The sequence is that of Transcription activator AFTR-2 from Alternaria alternata (Alternaria rot fungus).